An 812-amino-acid chain; its full sequence is Plasminogen (812 aa).

The first 19 residues, 1-19 (MDHKEIILLFLLFLKPGQG), serve as a signal peptide directing secretion. The 79-residue stretch at 20–98 (DSLDGYVSTQ…RDVILFEKRV (79 aa)) folds into the PAN domain. 21 cysteine pairs are disulfide-bonded: Cys-49-Cys-73, Cys-53-Cys-61, Cys-103-Cys-181, Cys-124-Cys-164, Cys-152-Cys-176, Cys-185-Cys-262, Cys-188-Cys-316, Cys-206-Cys-245, Cys-234-Cys-257, Cys-275-Cys-352, Cys-296-Cys-335, Cys-324-Cys-347, Cys-376-Cys-454, Cys-397-Cys-437, Cys-425-Cys-449, Cys-481-Cys-560, Cys-502-Cys-543, Cys-531-Cys-555, Cys-568-Cys-687, Cys-578-Cys-586, and Cys-609-Cys-625. 5 consecutive Kringle domains span residues 102–181 (ECKT…IPEC), 184–262 (ECMY…IPRC), 274–352 (QCLK…IPSC), 375–454 (ECYQ…LKRC), and 480–560 (DCMY…IPLC). Residues 582 to 810 (VVGGCVANPH…YVNWIEREMR (229 aa)) enclose the Peptidase S1 domain. Position 598 is a phosphoserine (Ser-598). Active-site charge relay system residues include His-624 and Asp-667. Ser-690 is modified (phosphoserine). Cystine bridges form between Cys-701-Cys-768, Cys-731-Cys-747, and Cys-758-Cys-786. The active-site Charge relay system is Ser-762.

It belongs to the peptidase S1 family. Plasminogen subfamily. As to quaternary structure, interacts (both mature PLG and the angiostatin peptide) with AMOT and CSPG4. Interacts (via the Kringle domains) with HRG; the interaction tethers PLG to the cell surface and enhances its activation. Interacts (via Kringle 4 domain) with ADA; the interaction stimulates PLG activation when in complex with DPP4. Angiostatin: Interacts with ATP5F1A; the interaction inhibits most of the angiogenic effects of angiostatin. In the presence of the inhibitor, the activation involves only cleavage after Arg-581, yielding two chains held together by two disulfide bonds. In the absence of the inhibitor, the activation involves additionally the removal of the activation peptide.

The protein localises to the secreted. The enzyme catalyses Preferential cleavage: Lys-|-Xaa &gt; Arg-|-Xaa, higher selectivity than trypsin. Converts fibrin into soluble products.. With respect to regulation, converted into plasmin by plasminogen activators, both plasminogen and its activator being bound to fibrin. Cannot be activated with streptokinase. Functionally, plasmin dissolves the fibrin of blood clots and acts as a proteolytic factor in a variety of other processes including embryonic development, tissue remodeling, tumor invasion, and inflammation. In ovulation, weakens the walls of the Graafian follicle. It activates the urokinase-type plasminogen activator, collagenases and several complement zymogens, such as C1, C4 and C5. Cleavage of fibronectin and laminin leads to cell detachment and apoptosis. Also cleaves fibrin, thrombospondin and von Willebrand factor. Its role in tissue remodeling and tumor invasion may be modulated by CSPG4. Binds to cells. Its function is as follows. Angiostatin is an angiogenesis inhibitor that blocks neovascularization and growth of experimental primary and metastatic tumors in vivo. In Rattus norvegicus (Rat), this protein is Plasminogen (Plg).